The chain runs to 223 residues: Ras-related protein Rab-37 (223 aa).

The segment covering 1 to 13 has biased composition (low complexity); that stretch reads MTGTPGAATAGDG. The disordered stretch occupies residues 1-22; the sequence is MTGTPGAATAGDGEAPERSPPF. An N-acetylthreonine modification is found at threonine 2. Residues serine 38, glycine 39, valine 40, glycine 41, lysine 42, threonine 43, cysteine 44, and threonine 62 each contribute to the GTP site. Threonine 43 provides a ligand contact to Mg(2+). 2 short sequence motifs (switch) span residues 52–67 and 85–102; these read GAFL…GIDS and DTAG…YYRD. Mg(2+) is bound by residues threonine 62 and aspartate 85. 7 residues coordinate GTP: glycine 88, asparagine 143, lysine 144, aspartate 146, serine 173, alanine 174, and lysine 175. Residues cysteine 219 and cysteine 220 are each lipidated (S-geranylgeranyl cysteine). Residue cysteine 220 is modified to Cysteine methyl ester. Residues 221 to 223 constitute a propeptide, removed in mature form; that stretch reads SFV.

It belongs to the small GTPase superfamily. Rab family. In terms of assembly, interacts with RIMS1. Interacts (in GDP-bound form) with RPGR, RPGR functions as guanine exchange factor (GEF). Requires Mg(2+) as cofactor. In terms of tissue distribution, expressed in the retina (at protein level). Specifically expressed in the bone marrow mast cells.

It localises to the cytoplasmic vesicle. The protein resides in the cell projection. The protein localises to the cilium. The catalysed reaction is GTP + H2O = GDP + phosphate + H(+). With respect to regulation, regulated by guanine nucleotide exchange factors (GEFs) including RPGR which promote the exchange of bound GDP for free GTP. Regulated by GTPase activating proteins (GAPs) which increase the GTP hydrolysis activity. Inhibited by GDP dissociation inhibitors (GDIs). In terms of biological role, the small GTPases Rab are key regulators of intracellular membrane trafficking, from the formation of transport vesicles to their fusion with membranes. Rabs cycle between an inactive GDP-bound form and an active GTP-bound form that is able to recruit to membranes different sets of downstream effectors directly responsible for vesicle formation, movement, tethering and fusion. Acts as an organizer for autophagosome biogenesis in a GTP-dependent manner. Involved in retinal homeostasis by autophagy regulation. The sequence is that of Ras-related protein Rab-37 from Mus musculus (Mouse).